The following is a 315-amino-acid chain: Putative methyltransferase NSUN5C (315 aa).

Residues 50-56 (VPPQAIK), D74, R79, and D121 each bind S-adenosyl-L-methionine. The Nucleophile role is filled by C175. The disordered stretch occupies residues 245-269 (TSASQAKASAPERTPSPAPKRKKRA).

It belongs to the class I-like SAM-binding methyltransferase superfamily. RsmB/NOP family. Ubiquitous.

May have S-adenosyl-L-methionine-dependent methyl-transferase activity. The polypeptide is Putative methyltransferase NSUN5C (NSUN5P2) (Homo sapiens (Human)).